The chain runs to 179 residues: Adenine phosphoribosyltransferase (179 aa).

It belongs to the purine/pyrimidine phosphoribosyltransferase family. As to quaternary structure, homodimer.

It is found in the cytoplasm. The catalysed reaction is AMP + diphosphate = 5-phospho-alpha-D-ribose 1-diphosphate + adenine. Its pathway is purine metabolism; AMP biosynthesis via salvage pathway; AMP from adenine: step 1/1. In terms of biological role, catalyzes a salvage reaction resulting in the formation of AMP, that is energically less costly than de novo synthesis. In Helicobacter acinonychis (strain Sheeba), this protein is Adenine phosphoribosyltransferase.